A 268-amino-acid polypeptide reads, in one-letter code: Tropinone reductase homolog (268 aa).

An NADP(+)-binding site is contributed by Leu21–Tyr45. Ser154 contributes to the substrate binding site. Catalysis depends on Tyr167, which acts as the Proton acceptor.

The protein belongs to the short-chain dehydrogenases/reductases (SDR) family.

The chain is Tropinone reductase homolog from Datura stramonium (Jimsonweed).